The chain runs to 272 residues: Methylsterol monooxygenase 2-1 (272 aa).

The next 3 membrane-spanning stretches (helical) occupy residues 24-44 (IGSF…YIFL), 72-94 (LLLY…FRFM), and 107-127 (VVSA…YWGH). The Fatty acid hydroxylase domain occupies 113–259 (LFYFIIEDFV…FVYMDWIFGT (147 aa)). A Histidine box-1 motif is present at residues 127-131 (HRILH). The short motif at 140–144 (HSVHH) is the Histidine box-2 element. 2 helical membrane passes run 162–182 (ILFL…HLIT) and 209–229 (NFLP…AYSA). Residues 231–237 (FHDYHHR) carry the Histidine box-3 motif.

The protein belongs to the sterol desaturase family. The cofactor is Fe cation. Strongly expressed in leaves, flowers, siliques and developing seeds.

The protein resides in the endoplasmic reticulum membrane. It carries out the reaction 4,4-dimethyl-5alpha-cholest-7-en-3beta-ol + 6 Fe(II)-[cytochrome b5] + 3 O2 + 5 H(+) = 4alpha-carboxy-4beta-methyl-5alpha-cholest-7-ene-3beta-ol + 6 Fe(III)-[cytochrome b5] + 4 H2O. It catalyses the reaction 24-methylidenelophenol + 6 Fe(II)-[cytochrome b5] + 3 O2 + 5 H(+) = 4alpha-carboxy-ergosta-7,24(24(1))-dien-3beta-ol + 6 Fe(III)-[cytochrome b5] + 4 H2O. In terms of biological role, non-heme iron oxygenase involved in sterols biosynthesis by catalyzing the removal of the second methyl group at the C-4 position. 24-ethylidenelophenol and 24-ethyllophenol are the preferred substrates. Together with SMO2-2, required during embryogenesis, probably by maintaining sterols and auxin homeostasis. This is Methylsterol monooxygenase 2-1 from Arabidopsis thaliana (Mouse-ear cress).